A 216-amino-acid polypeptide reads, in one-letter code: Large ribosomal subunit protein uL1 (216 aa).

This sequence belongs to the universal ribosomal protein uL1 family.

This is Large ribosomal subunit protein uL1 from Oryza sativa subsp. indica (Rice).